Consider the following 211-residue polypeptide: Uridine kinase (211 aa).

12 to 19 contacts ATP; sequence GGSGSGKT.

This sequence belongs to the uridine kinase family.

Its subcellular location is the cytoplasm. The catalysed reaction is uridine + ATP = UMP + ADP + H(+). It carries out the reaction cytidine + ATP = CMP + ADP + H(+). The protein operates within pyrimidine metabolism; CTP biosynthesis via salvage pathway; CTP from cytidine: step 1/3. It functions in the pathway pyrimidine metabolism; UMP biosynthesis via salvage pathway; UMP from uridine: step 1/1. This chain is Uridine kinase, found in Geobacillus kaustophilus (strain HTA426).